The sequence spans 316 residues: Biotin synthase (316 aa).

The 229-residue stretch at 36 to 264 (TEIQISTLLS…ASRVRLAAGR (229 aa)) folds into the Radical SAM core domain. Residues Cys-51, Cys-55, and Cys-58 each contribute to the [4Fe-4S] cluster site. Positions 96, 127, 187, and 259 each coordinate [2Fe-2S] cluster.

Belongs to the radical SAM superfamily. Biotin synthase family. As to quaternary structure, homodimer. Requires [4Fe-4S] cluster as cofactor. It depends on [2Fe-2S] cluster as a cofactor.

The enzyme catalyses (4R,5S)-dethiobiotin + (sulfur carrier)-SH + 2 reduced [2Fe-2S]-[ferredoxin] + 2 S-adenosyl-L-methionine = (sulfur carrier)-H + biotin + 2 5'-deoxyadenosine + 2 L-methionine + 2 oxidized [2Fe-2S]-[ferredoxin]. The protein operates within cofactor biosynthesis; biotin biosynthesis; biotin from 7,8-diaminononanoate: step 2/2. In terms of biological role, catalyzes the conversion of dethiobiotin (DTB) to biotin by the insertion of a sulfur atom into dethiobiotin via a radical-based mechanism. In Gluconacetobacter diazotrophicus (strain ATCC 49037 / DSM 5601 / CCUG 37298 / CIP 103539 / LMG 7603 / PAl5), this protein is Biotin synthase.